The following is a 455-amino-acid chain: Nuclear receptor subfamily 6 group A member 1-B (455 aa).

Residues 38–113 (ERWCLICGDR…MGMNRKAIRE (76 aa)) constitute a DNA-binding region (nuclear receptor). 2 consecutive NR C4-type zinc fingers follow at residues 41 to 61 (CLIC…CEGC) and 77 to 96 (CNRD…CQYC). Residues 145 to 173 (EGSDLSDSWSHGYSNHSSPGNSLSEGGQS) form a disordered region. The span at 149–165 (LSDSWSHGYSNHSSPGN) shows a compositional bias: polar residues. Positions 215–446 (QTHTLTGQIL…YSCTTNQNPW (232 aa)) constitute an NR LBD domain.

It belongs to the nuclear hormone receptor family. NR6 subfamily. As to quaternary structure, homodimer.

It localises to the nucleus. Probable orphan nuclear receptor. Binds to a response element containing repeats of the motif 5'-AGGTCA-3'. This Danio rerio (Zebrafish) protein is Nuclear receptor subfamily 6 group A member 1-B.